A 788-amino-acid chain; its full sequence is Protein TRS1 (788 aa).

Disordered stretches follow at residues 1 to 82 (MAQR…NFWH) and 610 to 663 (IHKK…PSRV). Positions 16–25 (RGRGAGGPSG) are enriched in gly residues. A compositionally biased stretch (low complexity) spans 26-56 (VGSSPPSSCVPMGATSTAGTGASAAPTATPG). Positions 74–248 (SGNNSNFWHG…HGAGEVVRLY (175 aa)) are RNA-binding. Residues 651–660 (LRRDDEDWKP) show a composition bias toward basic and acidic residues. Residues 672–788 (LDETFWVLGS…NVATHYHYNA (117 aa)) are interaction with host EIF2AK2/PKR.

It belongs to the herpesviridae US22 family. In terms of assembly, interacts with host EIF2AK2/PKR; this interaction retains EIF2AK2 to the host nucleus and prevents its activation. Interaction (via N-terminus) with host BECN1; this interaction inhibits host autophagy. Interacts with the viral DNA polymerase accessory subunit UL44. Interacts with host HSPA5.

The protein localises to the virion. The protein resides in the host cytoplasm. It localises to the host nucleus. Functionally, inhibits the establishment of the antiviral state in the infected cell. Prevents the phosphorylation of the host eukaryotic translation initiation factor eIF-2alpha/EIF2S1 and thus the shutoff of viral and cellular protein synthesis by directly interacting with EIF2AK2/PKR. Prevents stress granule formation in response to eIF-2alpha/EIF2S1 phosphorylation, thereby rescuing viral replication and protein synthesis. Also inhibits host autophagy by interacting with host Beclin-1/BECN1. The chain is Protein TRS1 (TRS1) from Human cytomegalovirus (strain Merlin) (HHV-5).